Here is a 402-residue protein sequence, read N- to C-terminus: GDSL esterase/lipase At1g20120 (402 aa).

Positions Met1–Ser35 are cleaved as a signal peptide. The segment at Arg41 to Lys69 is disordered. Positions Asn44–Ala64 are enriched in pro residues. Asn73 is a glycosylation site (N-linked (GlcNAc...) asparagine). Ser85 functions as the Nucleophile in the catalytic mechanism. N-linked (GlcNAc...) asparagine glycans are attached at residues Asn314 and Asn367. Active-site residues include Asp375 and His378.

Belongs to the 'GDSL' lipolytic enzyme family.

It is found in the secreted. The chain is GDSL esterase/lipase At1g20120 from Arabidopsis thaliana (Mouse-ear cress).